The chain runs to 829 residues: Periplasmic nitrate reductase (829 aa).

Residues 1 to 30 constitute a signal peptide (tat-type signal); that stretch reads MKMTRRAFVKANAAASAAAVAGITLPASAA. The region spanning 41–97 is the 4Fe-4S Mo/W bis-MGD-type domain; sequence ITWDKAPCRFCGTGCSVLVGTQNGKVVATQGDPEAPVNKGLNCIKGYFLSKIMYGQD. Cys48, Cys51, Cys55, and Cys83 together coordinate [4Fe-4S] cluster. Mo-bis(molybdopterin guanine dinucleotide)-binding positions include Lys85, Gln152, Asn177, Cys181, 214 to 221, 245 to 249, 264 to 266, Met374, Gln378, Asn484, 510 to 511, Lys533, Asp560, and 718 to 727; these read WGSNMAEM, STYYH, QSD, SD, and TGRVLEHWHT. Phe794 contacts substrate. Residues Asn802 and Lys819 each contribute to the Mo-bis(molybdopterin guanine dinucleotide) site.

The protein belongs to the prokaryotic molybdopterin-containing oxidoreductase family. NasA/NapA/NarB subfamily. As to quaternary structure, component of the periplasmic nitrate reductase NapAB complex composed of NapA and NapB. The cofactor is [4Fe-4S] cluster. Requires Mo-bis(molybdopterin guanine dinucleotide) as cofactor. Post-translationally, predicted to be exported by the Tat system. The position of the signal peptide cleavage has not been experimentally proven.

Its subcellular location is the periplasm. It carries out the reaction 2 Fe(II)-[cytochrome] + nitrate + 2 H(+) = 2 Fe(III)-[cytochrome] + nitrite + H2O. Functionally, catalytic subunit of the periplasmic nitrate reductase complex NapAB. Receives electrons from NapB and catalyzes the reduction of nitrate to nitrite. This is Periplasmic nitrate reductase from Vibrio vulnificus (strain YJ016).